Reading from the N-terminus, the 424-residue chain is Imidazolonepropionase (424 aa).

Fe(3+) is bound by residues H84 and H86. Residues H84 and H86 each coordinate Zn(2+). Residues R93, Y156, and H189 each contribute to the 4-imidazolone-5-propanoate site. Position 156 (Y156) interacts with N-formimidoyl-L-glutamate. H254 contributes to the Fe(3+) binding site. Zn(2+) is bound at residue H254. E257 is a binding site for 4-imidazolone-5-propanoate. Position 328 (D328) interacts with Fe(3+). D328 contacts Zn(2+). Positions 330 and 332 each coordinate N-formimidoyl-L-glutamate. Position 333 (S333) interacts with 4-imidazolone-5-propanoate.

It belongs to the metallo-dependent hydrolases superfamily. HutI family. Zn(2+) serves as cofactor. It depends on Fe(3+) as a cofactor.

It localises to the cytoplasm. The enzyme catalyses 4-imidazolone-5-propanoate + H2O = N-formimidoyl-L-glutamate. It functions in the pathway amino-acid degradation; L-histidine degradation into L-glutamate; N-formimidoyl-L-glutamate from L-histidine: step 3/3. Catalyzes the hydrolytic cleavage of the carbon-nitrogen bond in imidazolone-5-propanoate to yield N-formimidoyl-L-glutamate. It is the third step in the universal histidine degradation pathway. In Geobacillus thermodenitrificans (strain NG80-2), this protein is Imidazolonepropionase.